Reading from the N-terminus, the 491-residue chain is UDP-GalNAc:beta-1,3-N-acetylgalactosaminyltransferase 2 (491 aa).

The Cytoplasmic segment spans residues 1 to 2 (MR). Residues 3 to 23 (SAAAALSVCVLAVLLHWICWT) form a helical; Signal-anchor for type II membrane protein membrane-spanning segment. Residues 24-491 (DRSAELLGFR…NKCGDPCGCS (468 aa)) lie on the Lumenal side of the membrane. N-linked (GlcNAc...) asparagine glycans are attached at residues Asn-167 and Asn-230.

Belongs to the glycosyltransferase 31 family.

The protein localises to the golgi apparatus membrane. It is found in the endoplasmic reticulum. It carries out the reaction 3-O-(N-acetyl-beta-D-glucosaminyl-(1-&gt;4)-alpha-D-mannosyl)-L-threonyl-[protein] + UDP-N-acetyl-alpha-D-galactosamine = 3-O-[beta-D-GalNAc-(1-&gt;3)-beta-D-GlcNAc-(1-&gt;4)-alpha-D-Man]-L-Thr-[protein] + UDP + H(+). It functions in the pathway protein modification; protein glycosylation. Its function is as follows. Beta-1,3-N-acetylgalactosaminyltransferase that synthesizes a unique carbohydrate structure, GalNAc-beta-1-3GlcNAc, on N- and O-glycans. Has no galactose nor galactosaminyl transferase activity toward any acceptor substrate. Involved in alpha-dystroglycan (dag1) glycosylation. This Danio rerio (Zebrafish) protein is UDP-GalNAc:beta-1,3-N-acetylgalactosaminyltransferase 2 (b3galnt2).